Reading from the N-terminus, the 336-residue chain is F-box protein At5g50450 (336 aa).

The 52-residue stretch at 19-70 (NNHFEDLHDDLIISILRKLATSASSPSDFLTVLSTCKRLNRLGLHPLVLSKA) folds into the F-box domain. Zn(2+) is bound by residues H263, C266, C279, C282, C288, C292, H301, and C305. An MYND-type; atypical zinc finger spans residues 263–305 (HGGCGRPETRAHEFRRCSVCGKVNYCSRGCQALDWRAKHKVEC).

The protein is F-box protein At5g50450 of Arabidopsis thaliana (Mouse-ear cress).